Here is a 174-residue protein sequence, read N- to C-terminus: Imidazole glycerol phosphate synthase subunit HisH (174 aa).

One can recognise a Glutamine amidotransferase type-1 domain in the interval 2–174 (SVVIINTGCA…AAVNKDNFWR (173 aa)). C77 serves as the catalytic Nucleophile.

In terms of assembly, heterodimer of HisH and HisF.

The protein localises to the cytoplasm. The enzyme catalyses 5-[(5-phospho-1-deoxy-D-ribulos-1-ylimino)methylamino]-1-(5-phospho-beta-D-ribosyl)imidazole-4-carboxamide + L-glutamine = D-erythro-1-(imidazol-4-yl)glycerol 3-phosphate + 5-amino-1-(5-phospho-beta-D-ribosyl)imidazole-4-carboxamide + L-glutamate + H(+). It carries out the reaction L-glutamine + H2O = L-glutamate + NH4(+). It functions in the pathway amino-acid biosynthesis; L-histidine biosynthesis; L-histidine from 5-phospho-alpha-D-ribose 1-diphosphate: step 5/9. Functionally, IGPS catalyzes the conversion of PRFAR and glutamine to IGP, AICAR and glutamate. The HisH subunit catalyzes the hydrolysis of glutamine to glutamate and ammonia as part of the synthesis of IGP and AICAR. The resulting ammonia molecule is channeled to the active site of HisF. This chain is Imidazole glycerol phosphate synthase subunit HisH (hisH), found in Buchnera aphidicola subsp. Schlechtendalia chinensis.